We begin with the raw amino-acid sequence, 22 residues long: Short-chain-enoyl-CoA hydratase (22 aa).

Belongs to the enoyl-CoA hydratase/isomerase family.

The enzyme catalyses a short-chain (3S)-3-hydroxyacyl-CoA = a short-chain (2E)-enoyl-CoA + H2O. It participates in lipid metabolism; butanoate metabolism. This is Short-chain-enoyl-CoA hydratase (crt) from Clostridium pasteurianum.